Here is a 379-residue protein sequence, read N- to C-terminus: MTSETSVNLLDFDAEGLVAYCGSLGEKPFRAKQLQRWIHQYNAGDFDGMTDLAKSLREKLKGRASIVMPEIASDHVSADGTRKWLIDVGNGNAVETVFIPEETRGTLCVSSQAGCAVNCRFCSTGKQGFSRNLSTAEIIGQLRMAEFALRASLGRAPGPNGKAERVVTNVVMMGMGEPLLNYNAVVPAMRLMLDDNAYGLSRRRVTLSTSGVVPMMDRLGAELPVALAVSLHAPNDALRDELVPLNKKHPLRELMAACQRYLKVAPRDFITFEYCMLDGVNDTEAHARELLAVTRDVPCKFNLIPFNPFPESGLIRSKPEQIKRFAQVLIDAGVVTTVRKTRGDDIDAACGQLAGAVKDRTRLAERTGAAAKIIEVRAI.

E95 serves as the catalytic Proton acceptor. Residues 101-345 (EETRGTLCVS…TTVRKTRGDD (245 aa)) enclose the Radical SAM core domain. An intrachain disulfide couples C108 to C350. The [4Fe-4S] cluster site is built by C115, C119, and C122. S-adenosyl-L-methionine is bound by residues 176-177 (GE), S208, 230-232 (SLH), and N307. The active-site S-methylcysteine intermediate is C350.

The protein belongs to the radical SAM superfamily. RlmN family. The cofactor is [4Fe-4S] cluster.

Its subcellular location is the cytoplasm. The enzyme catalyses adenosine(2503) in 23S rRNA + 2 reduced [2Fe-2S]-[ferredoxin] + 2 S-adenosyl-L-methionine = 2-methyladenosine(2503) in 23S rRNA + 5'-deoxyadenosine + L-methionine + 2 oxidized [2Fe-2S]-[ferredoxin] + S-adenosyl-L-homocysteine. It carries out the reaction adenosine(37) in tRNA + 2 reduced [2Fe-2S]-[ferredoxin] + 2 S-adenosyl-L-methionine = 2-methyladenosine(37) in tRNA + 5'-deoxyadenosine + L-methionine + 2 oxidized [2Fe-2S]-[ferredoxin] + S-adenosyl-L-homocysteine. Its function is as follows. Specifically methylates position 2 of adenine 2503 in 23S rRNA and position 2 of adenine 37 in tRNAs. m2A2503 modification seems to play a crucial role in the proofreading step occurring at the peptidyl transferase center and thus would serve to optimize ribosomal fidelity. The protein is Dual-specificity RNA methyltransferase RlmN of Burkholderia ambifaria (strain MC40-6).